The chain runs to 54 residues: Ovomucoid (54 aa).

Residues 4 to 54 (VDCSDYPTHGCTLELKPICGSDNQTYSNKCGFCNAVAQSNGTLTLSHFGKC) enclose the Kazal-like domain. Intrachain disulfides connect Cys-6-Cys-36, Cys-14-Cys-33, and Cys-22-Cys-54. Residue Asn-43 is glycosylated (N-linked (GlcNAc...) asparagine).

It localises to the secreted. The sequence is that of Ovomucoid from Aepypodius arfakianus (Wattled brush turkey).